A 353-amino-acid chain; its full sequence is Draxin-B (353 aa).

The first 21 residues, 1–21 (MASSWCLPLALLVSNLAVSHS), serve as a signal peptide directing secretion. Disordered stretches follow at residues 23–183 (EPSS…KEGS), 198–222 (TVMS…RGKV), and 246–268 (VDAW…SGNV). Basic residues predominate over residues 138-167 (GPHKGKAQGHGHHFDHRRHGGRRDKGRHTK). Positions 252-261 (SRKKDKRRSK) are enriched in basic residues. 2 N-linked (GlcNAc...) asparagine glycosylation sites follow: Asn-262 and Asn-267.

The protein belongs to the draxin family.

It localises to the secreted. Chemorepulsive axon guidance protein required for the development of spinal cord and forebrain commissures. Acts as a chemorepulsive guidance protein for commissural axons during development. Able to inhibit or repel neurite outgrowth from dorsal spinal cord. This is Draxin-B (draxin-B) from Salmo salar (Atlantic salmon).